The following is a 242-amino-acid chain: Uridylate kinase (242 aa).

Position 12-15 (12-15) interacts with ATP; it reads KLSG. Positions 20-25 are involved in allosteric activation by GTP; the sequence is GDEGFG. UMP is bound at residue Gly54. Residues Gly55 and Arg59 each contribute to the ATP site. Residues Asp74 and 135–142 each bind UMP; that span reads TGSPFFTT. ATP is bound by residues Thr162, Tyr168, and Asp171.

It belongs to the UMP kinase family. In terms of assembly, homohexamer.

The protein resides in the cytoplasm. It catalyses the reaction UMP + ATP = UDP + ADP. The protein operates within pyrimidine metabolism; CTP biosynthesis via de novo pathway; UDP from UMP (UMPK route): step 1/1. Its activity is regulated as follows. Allosterically activated by GTP. Inhibited by UTP. Functionally, catalyzes the reversible phosphorylation of UMP to UDP. This chain is Uridylate kinase, found in Pasteurella multocida (strain Pm70).